Reading from the N-terminus, the 688-residue chain is Glycine--tRNA ligase beta subunit (688 aa).

The protein belongs to the class-II aminoacyl-tRNA synthetase family. As to quaternary structure, tetramer of two alpha and two beta subunits.

Its subcellular location is the cytoplasm. It catalyses the reaction tRNA(Gly) + glycine + ATP = glycyl-tRNA(Gly) + AMP + diphosphate. The protein is Glycine--tRNA ligase beta subunit (glyS) of Haemophilus influenzae (strain ATCC 51907 / DSM 11121 / KW20 / Rd).